Here is a 268-residue protein sequence, read N- to C-terminus: Fibroblast growth factor 8 (268 aa).

Positions 1 to 22 (MGSPRSALSCLLLHLLVLCLQA) are cleaved as a signal peptide. At Gln-23 the chain carries Pyrrolidone carboxylic acid. Residues 29–87 (QKRGPGAGNPADTLGQGHEDRPFGQRSRAGKNFTNPAPNYPEEGSKEQRDSVLPKVTQR) form a disordered region. Residue Asn-60 is glycosylated (N-linked (GlcNAc...) asparagine). Residues 71-80 (EGSKEQRDSV) are compositionally biased toward basic and acidic residues. Residue Asn-190 is glycosylated (N-linked (GlcNAc...) asparagine).

The protein belongs to the heparin-binding growth factors family. Monomer. Homodimer. Interacts with FGFR1, FGFR2, FGFR3 and FGFR4. Affinity between fibroblast growth factors (FGFs) and their receptors is increased by heparan sulfate glycosaminoglycans that function as coreceptors. Post-translationally, the N-terminus is blocked. Absent in normal mammary glands and detected only in adult testis and ovary and in midgestational embryos.

It localises to the secreted. Functionally, plays an important role in the regulation of embryonic development, cell proliferation, cell differentiation and cell migration. Required for normal brain, eye, ear and limb development during embryogenesis. Required for normal development of the gonadotropin-releasing hormone (GnRH) neuronal system. Plays a role in neurite outgrowth in hippocampal cells. Cooperates with Wnt-1 in mouse mammary tumor virus-induced murine mammary tumorigenesis. The protein is Fibroblast growth factor 8 (Fgf8) of Mus musculus (Mouse).